Here is a 428-residue protein sequence, read N- to C-terminus: UPF0761 membrane protein Ppha_1623 (428 aa).

6 helical membrane-spanning segments follow: residues leucine 52–phenylalanine 72, serine 108–valine 128, phenylalanine 148–alanine 168, leucine 189–valine 209, phenylalanine 216–serine 233, and glycine 252–leucine 272.

Belongs to the UPF0761 family.

The protein localises to the cell inner membrane. The chain is UPF0761 membrane protein Ppha_1623 from Pelodictyon phaeoclathratiforme (strain DSM 5477 / BU-1).